Reading from the N-terminus, the 305-residue chain is Glycine--tRNA ligase alpha subunit (305 aa).

It belongs to the class-II aminoacyl-tRNA synthetase family. Tetramer of two alpha and two beta subunits.

It localises to the cytoplasm. It carries out the reaction tRNA(Gly) + glycine + ATP = glycyl-tRNA(Gly) + AMP + diphosphate. The polypeptide is Glycine--tRNA ligase alpha subunit (Streptococcus pneumoniae serotype 4 (strain ATCC BAA-334 / TIGR4)).